The following is a 465-amino-acid chain: Methionine aminopeptidase 2-2 (465 aa).

The segment covering 1–13 has biased composition (basic and acidic residues); sequence MGSKTPNDHRRGP. Residues 1–92 form a disordered region; sequence MGSKTPNDHR…KKKTLLGGLQ (92 aa). The segment covering 44-55 has biased composition (acidic residues); sequence GETEDGEDEDDD. Residues 71–86 show a composition bias toward basic residues; it reads TKKKNKRKKNKKKKKT. Position 217 (His217) interacts with substrate. Asp238, Asp249, and His318 together coordinate a divalent metal cation. His326 contributes to the substrate binding site. A divalent metal cation contacts are provided by Glu351 and Glu446.

This sequence belongs to the peptidase M24A family. Methionine aminopeptidase eukaryotic type 2 subfamily. Co(2+) is required as a cofactor. Requires Zn(2+) as cofactor. It depends on Mn(2+) as a cofactor. The cofactor is Fe(2+).

Its subcellular location is the cytoplasm. The enzyme catalyses Release of N-terminal amino acids, preferentially methionine, from peptides and arylamides.. Functionally, cotranslationally removes the N-terminal methionine from nascent proteins. The N-terminal methionine is often cleaved when the second residue in the primary sequence is small and uncharged (Met-Ala-, Cys, Gly, Pro, Ser, Thr, or Val). The protein is Methionine aminopeptidase 2-2 of Blastomyces gilchristii (strain SLH14081) (Blastomyces dermatitidis).